Here is a 221-residue protein sequence, read N- to C-terminus: Iron-sulfur cluster repair protein YtfE (221 aa).

Belongs to the RIC family. YtfE subfamily. In terms of assembly, homodimer.

The protein localises to the cytoplasm. Its function is as follows. Di-iron-containing protein involved in the repair of iron-sulfur clusters damaged by oxidative and nitrosative stress conditions. This Yersinia pseudotuberculosis serotype O:1b (strain IP 31758) protein is Iron-sulfur cluster repair protein YtfE.